The sequence spans 125 residues: Protein Turandot F (125 aa).

The N-terminal stretch at 1 to 19 (MKTVILFGFLLALLGYLEA) is a signal peptide.

This sequence belongs to the Turandot family.

Its subcellular location is the secreted. Its function is as follows. A humoral factor that may play a role in stress tolerance. The protein is Protein Turandot F of Drosophila melanogaster (Fruit fly).